A 231-amino-acid chain; its full sequence is Cytidylate kinase (231 aa).

12–20 (GPSGAGKGT) serves as a coordination point for ATP.

The protein belongs to the cytidylate kinase family. Type 1 subfamily.

It localises to the cytoplasm. It catalyses the reaction CMP + ATP = CDP + ADP. The enzyme catalyses dCMP + ATP = dCDP + ADP. The protein is Cytidylate kinase of Shewanella amazonensis (strain ATCC BAA-1098 / SB2B).